Here is a 176-residue protein sequence, read N- to C-terminus: Large ribosomal subunit protein uL6 (176 aa).

It belongs to the universal ribosomal protein uL6 family. Part of the 50S ribosomal subunit.

Functionally, this protein binds to the 23S rRNA, and is important in its secondary structure. It is located near the subunit interface in the base of the L7/L12 stalk, and near the tRNA binding site of the peptidyltransferase center. The polypeptide is Large ribosomal subunit protein uL6 (Burkholderia ambifaria (strain MC40-6)).